We begin with the raw amino-acid sequence, 273 residues long: Formamidopyrimidine-DNA glycosylase (273 aa).

Proline 2 acts as the Schiff-base intermediate with DNA in catalysis. Residue glutamate 3 is the Proton donor of the active site. Lysine 59 (proton donor; for beta-elimination activity) is an active-site residue. DNA contacts are provided by histidine 92 and arginine 111. The FPG-type zinc-finger motif lies at 239–273; that stretch reads KVYGKTDEPCVVCGKPIEKIKLNGRGTHFCPNCQK. The active-site Proton donor; for delta-elimination activity is arginine 263.

The protein belongs to the FPG family. Monomer. Zn(2+) is required as a cofactor.

The catalysed reaction is Hydrolysis of DNA containing ring-opened 7-methylguanine residues, releasing 2,6-diamino-4-hydroxy-5-(N-methyl)formamidopyrimidine.. It carries out the reaction 2'-deoxyribonucleotide-(2'-deoxyribose 5'-phosphate)-2'-deoxyribonucleotide-DNA = a 3'-end 2'-deoxyribonucleotide-(2,3-dehydro-2,3-deoxyribose 5'-phosphate)-DNA + a 5'-end 5'-phospho-2'-deoxyribonucleoside-DNA + H(+). In terms of biological role, involved in base excision repair of DNA damaged by oxidation or by mutagenic agents. Acts as a DNA glycosylase that recognizes and removes damaged bases. Has a preference for oxidized purines, such as 7,8-dihydro-8-oxoguanine (8-oxoG). Has AP (apurinic/apyrimidinic) lyase activity and introduces nicks in the DNA strand. Cleaves the DNA backbone by beta-delta elimination to generate a single-strand break at the site of the removed base with both 3'- and 5'-phosphates. This Listeria monocytogenes serotype 4b (strain F2365) protein is Formamidopyrimidine-DNA glycosylase.